The sequence spans 320 residues: Malate dehydrogenase (320 aa).

NAD(+)-binding positions include 10–15 and Asp-34; that span reads GAGMIG. Substrate-binding residues include Arg-83 and Arg-89. NAD(+) is bound by residues Asn-96 and 119–121; that span reads ITN. Residues Asn-121 and Arg-152 each coordinate substrate. His-176 (proton acceptor) is an active-site residue.

Belongs to the LDH/MDH superfamily. MDH type 3 family.

It catalyses the reaction (S)-malate + NAD(+) = oxaloacetate + NADH + H(+). Functionally, catalyzes the reversible oxidation of malate to oxaloacetate. This chain is Malate dehydrogenase, found in Caulobacter sp. (strain K31).